The chain runs to 237 residues: Sugar fermentation stimulation protein homolog (237 aa).

This sequence belongs to the SfsA family.

This is Sugar fermentation stimulation protein homolog from Methylobacterium radiotolerans (strain ATCC 27329 / DSM 1819 / JCM 2831 / NBRC 15690 / NCIMB 10815 / 0-1).